Here is a 252-residue protein sequence, read N- to C-terminus: Geranylgeranylglyceryl phosphate synthase (252 aa).

Positions 22 and 51 each coordinate Mg(2+). Sn-glycerol 1-phosphate contacts are provided by residues 170–176 (YFEAGSG), 201–202 (GG), and 223–224 (GS).

Belongs to the GGGP/HepGP synthase family. Group II subfamily. The cofactor is Mg(2+).

The protein resides in the cytoplasm. The enzyme catalyses sn-glycerol 1-phosphate + (2E,6E,10E)-geranylgeranyl diphosphate = sn-3-O-(geranylgeranyl)glycerol 1-phosphate + diphosphate. Its pathway is membrane lipid metabolism; glycerophospholipid metabolism. Prenyltransferase that catalyzes the transfer of the geranylgeranyl moiety of geranylgeranyl diphosphate (GGPP) to the C3 hydroxyl of sn-glycerol-1-phosphate (G1P). This reaction is the first ether-bond-formation step in the biosynthesis of archaeal membrane lipids. This is Geranylgeranylglyceryl phosphate synthase from Thermoplasma volcanium (strain ATCC 51530 / DSM 4299 / JCM 9571 / NBRC 15438 / GSS1).